A 200-amino-acid polypeptide reads, in one-letter code: Urease accessory protein UreG (200 aa).

11-18 (GPVGSGKT) serves as a coordination point for GTP.

This sequence belongs to the SIMIBI class G3E GTPase family. UreG subfamily. In terms of assembly, homodimer. UreD, UreF and UreG form a complex that acts as a GTP-hydrolysis-dependent molecular chaperone, activating the urease apoprotein by helping to assemble the nickel containing metallocenter of UreC. The UreE protein probably delivers the nickel.

The protein resides in the cytoplasm. Facilitates the functional incorporation of the urease nickel metallocenter. This process requires GTP hydrolysis, probably effectuated by UreG. The sequence is that of Urease accessory protein UreG from Thermosynechococcus vestitus (strain NIES-2133 / IAM M-273 / BP-1).